The sequence spans 827 residues: Centrosomal protein of 95 kDa (827 aa).

Disordered stretches follow at residues 115 to 145, 183 to 249, 308 to 372, 388 to 476, and 489 to 558; these read ISES…ERTE, GDTA…MVPS, FLTS…MSEK, LGDR…DSCH, and ELRK…KASP. Over residues 123–145 the composition is skewed to basic and acidic residues; sequence SETEQYSKDSHGEEAGEDLERTE. The span at 187-199 shows a compositional bias: polar residues; that stretch reads HTFSQRSNGAQNS. Composition is skewed to basic and acidic residues over residues 327–343 and 360–372; these read EATR…DENR and PLTE…MSEK. Residues S447, S449, and S451 each carry the phosphoserine modification. Coiled-coil stretches lie at residues 584-633 and 701-795; these read LTKM…VKKE and LQIQ…DDDA.

The protein localises to the cytoplasm. It is found in the cytoskeleton. Its subcellular location is the microtubule organizing center. The protein resides in the centrosome. It localises to the spindle pole. The sequence is that of Centrosomal protein of 95 kDa (Cep95) from Mus musculus (Mouse).